A 395-amino-acid polypeptide reads, in one-letter code: Phosphoribulokinase, chloroplastic (395 aa).

Residues 1-46 (MAVSTIYSTQALNSTHFLTSSSSSKQVFLYRRQPQTNRRFNTLITC) constitute a chloroplast transit peptide. An intrachain disulfide couples Cys-61 to Cys-100.

This sequence belongs to the phosphoribulokinase family.

The protein localises to the plastid. It is found in the chloroplast. It carries out the reaction D-ribulose 5-phosphate + ATP = D-ribulose 1,5-bisphosphate + ADP + H(+). Its pathway is carbohydrate biosynthesis; Calvin cycle. Its activity is regulated as follows. Light regulated via thioredoxin by reversible oxidation/reduction of sulfhydryl/disulfide groups. This chain is Phosphoribulokinase, chloroplastic, found in Arabidopsis thaliana (Mouse-ear cress).